The chain runs to 378 residues: Spermatogenic leucine zipper protein 1 (378 aa).

The disordered stretch occupies residues 1 to 31 (MSDTDNSAEMPARCPSPNPAPGAKQEPPNSG). Serine 106 bears the Phosphoserine mark. The interval 116-122 (KNKIRFK) is interaction with PPP1CC isoform gamma-2. Residues 116–127 (KNKIRFKDDLFI) form a helix-loop-helix motif region. Residues 128–193 (HFDPEREQNT…HLRGEYRKLR (66 aa)) are basic motif. The stretch at 182-233 (SLHLRGEYRKLRNNMEQLLQEADHWSKQHNELSELMRSYQECQNETQETTDK) forms a coiled coil. Position 207 is a phosphoserine (serine 207). Residues 252 to 273 (LEEQVKKLSHDTHALHLIAALL) are leucine-zipper.

As to quaternary structure, interacts with PPP1CC isoform gamma-2. This interaction can prevent SPZ1 binding to the E-box and inhibits PPP1CC activity. Post-translationally, phosphorylated by MAPK1/ERK2 and MAPK3/ERK1. Expressed specifically in the testis and epidydimis. In the testis expressed in both germ cells and somatic cells (Sertoli and Leydig cells). Expressed in several tumor cell lines.

Its subcellular location is the cytoplasm. It is found in the nucleus. Transcription factor that binds to the DNA sequence 5'-CANNTG-3'(E box) and the G-box motif. Directly binds to a guanine-rich region of the PCNA promoter and up-regulates its expression which in turn induces cell transformation and tumor formation. May play an important role in the regulation of cell proliferation and differentiation during spermatogenesis. The protein is Spermatogenic leucine zipper protein 1 (Spz1) of Mus musculus (Mouse).